Consider the following 447-residue polypeptide: Argininosuccinate synthase (447 aa).

Residues 17-25 (AFSGGLDTS) and Ala43 each bind ATP. L-citrulline is bound at residue Tyr99. ATP-binding residues include Gly129 and Thr131. 3 residues coordinate L-aspartate: Thr131, Asn135, and Asp136. Asn135 serves as a coordination point for L-citrulline. Asp136 is an ATP binding site. L-citrulline contacts are provided by Arg139 and Ser192. Asp194 is an ATP binding site. L-citrulline-binding residues include Thr201, Glu203, and Glu280.

Belongs to the argininosuccinate synthase family. Type 2 subfamily. Homotetramer.

The protein resides in the cytoplasm. It catalyses the reaction L-citrulline + L-aspartate + ATP = 2-(N(omega)-L-arginino)succinate + AMP + diphosphate + H(+). It functions in the pathway amino-acid biosynthesis; L-arginine biosynthesis; L-arginine from L-ornithine and carbamoyl phosphate: step 2/3. The protein is Argininosuccinate synthase of Salmonella agona (strain SL483).